We begin with the raw amino-acid sequence, 433 residues long: Trigger factor (433 aa).

The PPIase FKBP-type domain occupies 163–248; sequence GDTVNIDFSG…VNEIKFKEVP (86 aa).

It belongs to the FKBP-type PPIase family. Tig subfamily.

It localises to the cytoplasm. The catalysed reaction is [protein]-peptidylproline (omega=180) = [protein]-peptidylproline (omega=0). In terms of biological role, involved in protein export. Acts as a chaperone by maintaining the newly synthesized protein in an open conformation. Functions as a peptidyl-prolyl cis-trans isomerase. The sequence is that of Trigger factor from Staphylococcus aureus (strain bovine RF122 / ET3-1).